The primary structure comprises 92 residues: Acyl-CoA-binding domain-containing protein 6 (92 aa).

An ACB domain is found at 3–88 (LKEEFEEHAE…VKQLLEVAAS (86 aa)). An acyl-CoA-binding positions include 30–34 (YGLYK), lysine 52, lysine 56, and tyrosine 75.

The protein belongs to the ACBP family. In terms of assembly, interacts with PDLP8. As to expression, mostly expressed in seeds, stems, and siliques, and, to a lower extent, in leaves, flowers, and roots (at protein level). Highly expressed in root and shoot phloem companion cells.

The protein resides in the cytoplasm. Its subcellular location is the cell membrane. Functionally, binds medium- and long-chain acyl-CoA esters with very high affinity. May function as an intracellular carrier of acyl-CoA esters. Confers resistance to cold and freezing. Interacts with phosphatidylcholine and derivatives, but not phosphatidic acid and lysophosphatidylcholine. May be involved in phospholipid metabolism. The protein is Acyl-CoA-binding domain-containing protein 6 (ACBP6) of Arabidopsis thaliana (Mouse-ear cress).